A 480-amino-acid chain; its full sequence is Argininosuccinate lyase (480 aa).

Belongs to the lyase 1 family. Argininosuccinate lyase subfamily.

The protein localises to the cytoplasm. It carries out the reaction 2-(N(omega)-L-arginino)succinate = fumarate + L-arginine. It participates in amino-acid biosynthesis; L-arginine biosynthesis; L-arginine from L-ornithine and carbamoyl phosphate: step 3/3. This chain is Argininosuccinate lyase, found in Ruthia magnifica subsp. Calyptogena magnifica.